A 175-amino-acid polypeptide reads, in one-letter code: Large ribosomal subunit protein uL10 (175 aa).

The protein belongs to the universal ribosomal protein uL10 family. Part of the ribosomal stalk of the 50S ribosomal subunit. The N-terminus interacts with L11 and the large rRNA to form the base of the stalk. The C-terminus forms an elongated spine to which L12 dimers bind in a sequential fashion forming a multimeric L10(L12)X complex.

Forms part of the ribosomal stalk, playing a central role in the interaction of the ribosome with GTP-bound translation factors. The sequence is that of Large ribosomal subunit protein uL10 from Prochlorococcus marinus (strain MIT 9515).